The following is a 421-amino-acid chain: 3-phosphoshikimate 1-carboxyvinyltransferase (421 aa).

The 3-phosphoshikimate site is built by Lys-19, Ser-20, and Arg-24. Lys-19 is a binding site for phosphoenolpyruvate. Gly-88 and Arg-116 together coordinate phosphoenolpyruvate. 4 residues coordinate 3-phosphoshikimate: Ser-160, Gln-162, Asp-307, and Lys-334. Gln-162 is a phosphoenolpyruvate binding site. The active-site Proton acceptor is the Asp-307. 2 residues coordinate phosphoenolpyruvate: Arg-338 and Arg-380.

The protein belongs to the EPSP synthase family. Monomer.

The protein localises to the cytoplasm. The catalysed reaction is 3-phosphoshikimate + phosphoenolpyruvate = 5-O-(1-carboxyvinyl)-3-phosphoshikimate + phosphate. Its pathway is metabolic intermediate biosynthesis; chorismate biosynthesis; chorismate from D-erythrose 4-phosphate and phosphoenolpyruvate: step 6/7. Its function is as follows. Catalyzes the transfer of the enolpyruvyl moiety of phosphoenolpyruvate (PEP) to the 5-hydroxyl of shikimate-3-phosphate (S3P) to produce enolpyruvyl shikimate-3-phosphate and inorganic phosphate. The polypeptide is 3-phosphoshikimate 1-carboxyvinyltransferase (Thermotoga sp. (strain RQ2)).